The sequence spans 602 residues: ATP-dependent DNA helicase XPD (602 aa).

In terms of domain architecture, Helicase ATP-binding spans 1-247 (MQKSYGVALE…DLIEMIRSAL (247 aa)). 11 to 18 (SPTGSGKT) provides a ligand contact to ATP. Positions 74, 95, 110, and 146 each coordinate [4Fe-4S] cluster. Positions 193–196 (DEAH) match the DEAH box motif. The 182-residue stretch at 421-602 (VIEDIILKVK…SAQAREKYGA (182 aa)) folds into the Helicase C-terminal domain. The ssDNA site is built by Trp-531 and Arg-566.

The protein belongs to the helicase family. RAD3/XPD subfamily. In terms of assembly, monomer. It depends on [4Fe-4S] cluster as a cofactor.

It catalyses the reaction Couples ATP hydrolysis with the unwinding of duplex DNA at the replication fork by translocating in the 5'-3' direction. This creates two antiparallel DNA single strands (ssDNA). The leading ssDNA polymer is the template for DNA polymerase III holoenzyme which synthesizes a continuous strand.. The catalysed reaction is ATP + H2O = ADP + phosphate + H(+). Functionally, ATP-dependent 5'-3' DNA helicase. Thought to be involved in nucleotide excision repair (NER) of DNA. This chain is ATP-dependent DNA helicase XPD, found in Thermoplasma acidophilum (strain ATCC 25905 / DSM 1728 / JCM 9062 / NBRC 15155 / AMRC-C165).